The sequence spans 479 residues: Long-chain alcohol oxidase (479 aa).

An FAD-binding PCMH-type domain is found at Gln-14–Gln-183. Position 49 is a pros-8alpha-FAD histidine (His-49). Residues Thr-113, Gly-116, Thr-120 to His-123, and Ile-173 each bind FAD. The chain crosses the membrane as a helical span at residues Leu-241–Leu-258. FAD is bound by residues Arg-369 and His-425.

Belongs to the oxygen-dependent FAD-linked oxidoreductase family. Requires FAD as cofactor.

The protein resides in the cell membrane. The catalysed reaction is a long-chain primary fatty alcohol + O2 = a long-chain fatty aldehyde + H2O2. It carries out the reaction dodecan-1-ol + O2 = dodecanal + H2O2. It catalyses the reaction tetradecan-1-ol + O2 = tetradecanal + H2O2. The enzyme catalyses octan-1-ol + O2 = octanal + H2O2. The catalysed reaction is decan-1-ol + O2 = decanal + H2O2. Its pathway is lipid metabolism; fatty acid metabolism. In vitro catalyzes the oxidation of a range of fatty alcohols having a carbon chain length of six and above, with a reduction of O2 to H2O2. Shows the highest activity with 1-dodecanol. Is likely involved in lipid metabolism. The polypeptide is Long-chain alcohol oxidase (Uncultured marine euryarchaeote).